We begin with the raw amino-acid sequence, 822 residues long: MSLASLARALSRRSAPSSSRARQGFSLGGLGGTTRSPPPPSSPLPSLHGGEGGGLGLGFVRGYLTAALGRPAAVKAGTDWRSILANPQFRRLFSDGSKKNYENYYPKGKKEAPKGDGSNKSDSKQDSSTDDQWNFQETASKQLQNFLAPLLFLGLMLSSLSSSSSDQKEISFQEFKNKLLEPGLVDRIVVSNKSVAKVYVRSSPQSNSQGQNTDAIITTNDVPSKHTPSRYKYYFNIGSVDSFEEKLEEAQEALGVDPHDFVPVTYVAEVNWFQEVMRFAPTVFLVGLIYLMSKRMQSGFNIGGGPGKGGRGIFNIGKAQVTKMDKNSKNKVFFKDVAGCDEAKQEIMEFVHFLKNPKKYEELGAKIPKGALLVGPPGTGKTLLAKATAGESGVPFLSISGSDFMEMFVGVGPSRVRNLFQEARQCAPSIIFIDEIDAIGRARGRGGFSGSNDERESTLNQLLVEMDGFGTTSGVVVLAGTNRPDILDKALLRPGRFDRQITIDKPDIKGRDQIFRIYLKKLKLDNEPSFYSQRLAALTPGFAGADIANVCNEAALIAARSEETQITMQHFESAIDRIIGGLEKKNKVISKLERRTVAYHESGHAVAGWFLEHAEPLLKVTIVPRGTAALGFAQYVPNENLLMTKEQLFDMTCMTLGGRAAEEVLIGRISTGAQNDLEKVTKMTYAQVAVYGFSEKVGLLSFPQRDDGFEMTKPYSNQTASIIDDEVREWVGKAYKKTVELITEHKEQVAKIAEMLLEKEVLHQDDLVRVLGERPFKASEPTNYDLFKQGFQDEEDSKNQEAAKTPQPDDDGTPSLGEVVPT.

Positions 1-25 (MSLASLARALSRRSAPSSSRARQGF) are enriched in low complexity. Disordered stretches follow at residues 1–50 (MSLA…LHGG), 103–131 (NYYP…STDD), and 202–221 (SSPQ…TTND). Residues 1-93 (MSLASLARAL…LANPQFRRLF (93 aa)) constitute a mitochondrion transit peptide. The segment covering 108–127 (GKKEAPKGDGSNKSDSKQDS) has biased composition (basic and acidic residues). 375–382 (GPPGTGKT) lines the ATP pocket. His-600 serves as a coordination point for Zn(2+). Glu-601 is a catalytic residue. Zn(2+) contacts are provided by His-604 and Asp-676. The disordered stretch occupies residues 781-822 (PTNYDLFKQGFQDEEDSKNQEAAKTPQPDDDGTPSLGEVVPT).

The protein in the N-terminal section; belongs to the AAA ATPase family. In the C-terminal section; belongs to the peptidase M41 family. The cofactor is Zn(2+).

The protein localises to the mitochondrion. Probable ATP-dependent zinc metallopeptidase. This chain is ATP-dependent zinc metalloprotease FTSH 8, mitochondrial (FTSH8), found in Oryza sativa subsp. japonica (Rice).